Here is a 152-residue protein sequence, read N- to C-terminus: Deoxyuridine 5'-triphosphate nucleotidohydrolase (152 aa).

Residues R71–G73, N84, and T88–D90 contribute to the substrate site.

This sequence belongs to the dUTPase family. The cofactor is Mg(2+).

It carries out the reaction dUTP + H2O = dUMP + diphosphate + H(+). It functions in the pathway pyrimidine metabolism; dUMP biosynthesis; dUMP from dCTP (dUTP route): step 2/2. This enzyme is involved in nucleotide metabolism: it produces dUMP, the immediate precursor of thymidine nucleotides and it decreases the intracellular concentration of dUTP so that uracil cannot be incorporated into DNA. This chain is Deoxyuridine 5'-triphosphate nucleotidohydrolase, found in Maricaulis maris (strain MCS10) (Caulobacter maris).